The sequence spans 102 residues: Ferredoxin, 2Fe-2S (102 aa).

Residues C11, C24, C56, and C60 each contribute to the [2Fe-2S] cluster site.

This sequence belongs to the 2Fe2S Shethna-type ferredoxin family. The cofactor is [2Fe-2S] cluster.

In terms of biological role, ferredoxins are iron-sulfur proteins that transfer electrons in a wide variety of metabolic reactions. In Clostridium pasteurianum, this protein is Ferredoxin, 2Fe-2S.